A 332-amino-acid polypeptide reads, in one-letter code: MTLLTRIKTETILLESDIKELIDILISPSIGTDIKYELLSSYSEREIQQQELTYIVRSLINTMYPHQPCYEGAMCVCGTGGDKSNSFNISTTVAFVVASAGVKVIKHGNKSITSNSGSTDLLNQMNIQTTTVDDTPNQLNEKDLVFIGATESYPIMKYMQPVRKMIGKPTILNLVGPLINPYHLTYQMVGVFDPTKLKLVAKTIKDLGRKRAIVLHGANGMDEATLSGDNLIYELTEDGEIKNYTLNATDYGLKHAPNSDFKGGSPEENLAISLNILNGKDQSSRRDVVLLNAGLSLYVAEKVDTIAEGIELATTLIDNGEALKKYHQMRGE.

Residues Gly78, 81–82 (GD), Ser86, 88–91 (NIST), 106–114 (KHGNKSITS), and Ser118 each bind 5-phospho-alpha-D-ribose 1-diphosphate. Gly78 serves as a coordination point for anthranilate. Ser90 serves as a coordination point for Mg(2+). Asn109 contributes to the anthranilate binding site. Position 163 (Arg163) interacts with anthranilate. Residues Asp222 and Glu223 each contribute to the Mg(2+) site.

Belongs to the anthranilate phosphoribosyltransferase family. Homodimer. Mg(2+) is required as a cofactor.

It carries out the reaction N-(5-phospho-beta-D-ribosyl)anthranilate + diphosphate = 5-phospho-alpha-D-ribose 1-diphosphate + anthranilate. Its pathway is amino-acid biosynthesis; L-tryptophan biosynthesis; L-tryptophan from chorismate: step 2/5. Catalyzes the transfer of the phosphoribosyl group of 5-phosphorylribose-1-pyrophosphate (PRPP) to anthranilate to yield N-(5'-phosphoribosyl)-anthranilate (PRA). In Staphylococcus aureus (strain Mu3 / ATCC 700698), this protein is Anthranilate phosphoribosyltransferase.